Reading from the N-terminus, the 289-residue chain is MKNILSIQSHVVFGHAGNSXAEFPXRRMGVNVWPLNTVQFSNHTQYPEKWTGCVMXAEHITEIVDGIAAIGKLAQCDAVLSGYLGSAEQGRRIVDIVKKVKQANPNAWYFCDPVMGHPEKGCIVPPEVSGVLCEDALPISDIIAPNLLELETLAGGATLHNVDQCVKAARQLCQQGPKIVLVKHLSRAGFRHDRFEMLLVTADHSWHVSRPLVDFGERQPVGVGDLTSGLMLVDLLKGVELKTALEHVAAAVYEVMLKTKEMNEYELQLVAAQDQMVHPTHNFCATQLD.

Substrate is bound by residues serine 9 and 44-45 (TQ). ATP-binding positions include aspartate 112, alanine 144, glutamate 149, lysine 183, and 210 to 213 (RPLV). Substrate is bound at residue aspartate 225.

Belongs to the pyridoxine kinase family. PdxY subfamily. Homodimer. Mg(2+) serves as cofactor.

It catalyses the reaction pyridoxal + ATP = pyridoxal 5'-phosphate + ADP + H(+). Its pathway is cofactor metabolism; pyridoxal 5'-phosphate salvage; pyridoxal 5'-phosphate from pyridoxal: step 1/1. Functionally, pyridoxal kinase involved in the salvage pathway of pyridoxal 5'-phosphate (PLP). Catalyzes the phosphorylation of pyridoxal to PLP. This is Pyridoxal kinase PdxY from Proteus mirabilis.